The primary structure comprises 882 residues: Pentatricopeptide repeat-containing protein At3g03580 (882 aa).

PPR repeat units follow at residues 3–37 (TRVS…GLDS), 38–68 (SDFF…VSPA), 70–104 (NVYL…KVSP), 105–139 (DKYT…GFES), 140–170 (DLFV…MPVR), 171–205 (DLVS…WIVP), 206–240 (DSFT…GVNS), 241–271 (VVVV…MDVR), 272–307 (DSVS…KPDL), 309–340 (TVSS…GFVL), 341–371 (ESTV…MECK), 372–406 (DTVS…EEQA), 407–441 (DHIT…GICI), 442–472 (DLSV…MGTG), 473–507 (DTVT…EVVP), 508–542 (DMAT…GYES), 543–573 (ELQI…MSRR), 574–608 (DVVT…GIVP), 609–639 (DSVV…MKTH), and 645–675 (MIEH…MPIK). Residues 680–755 (IWASVLRACR…NPGYSWIEVG (76 aa)) are type E motif. Residues 756–786 (KNVHVFSSGDDSAPQSEAIYKSLEILYSLMA) form a type E(+) motif region. The tract at residues 787-882 (KEGYIPDPRE…DGTCSCKDRW (96 aa)) is type DYW motif.

The protein belongs to the PPR family. PCMP-H subfamily.

The protein is Pentatricopeptide repeat-containing protein At3g03580 (PCMP-H23) of Arabidopsis thaliana (Mouse-ear cress).